Consider the following 183-residue polypeptide: Calcium-binding protein M (183 aa).

G2 is lipidated: N-myristoyl glycine. 4 consecutive EF-hand domains span residues E25–N60, Y61–G96, S97–V132, and D142–L177. Residues D74, D76, S78, T80, E85, D110, D112, S114, E121, D155, D157, N159, and E166 each contribute to the Ca(2+) site.

It belongs to the recoverin family.

The polypeptide is Calcium-binding protein M (cbpM) (Dictyostelium discoideum (Social amoeba)).